A 412-amino-acid chain; its full sequence is MAGSAPEGTQFDTRQFDQRLNEVLDGQDEFFTSYDEVHESFDAMGLQENLLRGIYAYGFEKPSAIQQRGIVPFCKGLDVIQQAQSGTGKTATFCSGVLQQLDYALLQCQALVLAPTRELAQQIEKVMRALGDYQGVKVHACVGGTSVREDQRILQAGVHVVVGTPGRVFDMLRRQSLRPDCIKMFVLDEADEMLSRGFKDQIYDIFQLLPPKIQVGVFSATMPPEALEITRKFMSKPVRILVKRDELTLEGIKQFYVNVEKEDWKLETLCDLYETLAITQSVIFVNTRRKVDWLTDKMRSRDHTVSATHGDMDQNTRDIIMREFRSGSSRVLITTDLLARGIDVQQVSLVINFDLPTQPENYLHRIGRSGRFGRKGVAINFVTLDDQRMLFDIQKFYNVVVEELPSNVADLL.

Ala-2 carries the post-translational modification N-acetylalanine. A Q motif motif is present at residues 39 to 67; that stretch reads ESFDAMGLQENLLRGIYAYGFEKPSAIQQ. A Helicase ATP-binding domain is found at 70-240; it reads IVPFCKGLDV…RKFMSKPVRI (171 aa). Residue 83 to 90 participates in ATP binding; the sequence is AQSGTGKT. At Thr-145 the chain carries Phosphothreonine. Positions 188 to 191 match the DEAD box motif; the sequence is DEAD. One can recognise a Helicase C-terminal domain in the interval 251–412; sequence GIKQFYVNVE…ELPSNVADLL (162 aa).

Belongs to the DEAD box helicase family. eIF4A subfamily. EIF4F is a multi-subunit complex, the composition of which varies with external and internal environmental conditions. It is composed of at least EIF4A, EIF4E and EIF4G. In terms of tissue distribution, ubiquitous. Preferentially expressed in flowers, young leaves and roots.

Its subcellular location is the cytoplasm. It carries out the reaction ATP + H2O = ADP + phosphate + H(+). In terms of biological role, ATP-dependent RNA helicase which is a subunit of the eIF4F complex involved in cap recognition and is required for mRNA binding to ribosome. In the current model of translation initiation, eIF4A unwinds RNA secondary structures in the 5'-UTR of mRNAs which is necessary to allow efficient binding of the small ribosomal subunit, and subsequent scanning for the initiator codon. In Arabidopsis thaliana (Mouse-ear cress), this protein is Eukaryotic initiation factor 4A-2 (TIF4A-2).